A 349-amino-acid chain; its full sequence is GTPase Obg (349 aa).

Residues 1–159 enclose the Obg domain; the sequence is MKFLDEAKVY…RWIWLRLKLI (159 aa). One can recognise an OBG-type G domain in the interval 160–327; sequence ADAGLVGLPN…ALRALVEVIG (168 aa). GTP is bound by residues 166 to 173, 191 to 195, 212 to 215, 279 to 282, and 308 to 310; these read GLPNAGKS, FTTLH, DIPG, NKID, and SGV. Positions 173 and 193 each coordinate Mg(2+).

It belongs to the TRAFAC class OBG-HflX-like GTPase superfamily. OBG GTPase family. As to quaternary structure, monomer. Requires Mg(2+) as cofactor.

It is found in the cytoplasm. Functionally, an essential GTPase which binds GTP, GDP and possibly (p)ppGpp with moderate affinity, with high nucleotide exchange rates and a fairly low GTP hydrolysis rate. Plays a role in control of the cell cycle, stress response, ribosome biogenesis and in those bacteria that undergo differentiation, in morphogenesis control. In Rhodopseudomonas palustris (strain BisB18), this protein is GTPase Obg.